We begin with the raw amino-acid sequence, 120 residues long: NAD(P)H-quinone oxidoreductase subunit 3, chloroplastic (120 aa).

3 helical membrane-spanning segments follow: residues 2–22 (FLLY…VIPI), 64–84 (MFAL…PWAL), and 88–108 (ILGV…VLGL).

The protein belongs to the complex I subunit 3 family. In terms of assembly, NDH is composed of at least 16 different subunits, 5 of which are encoded in the nucleus.

Its subcellular location is the plastid. The protein localises to the chloroplast thylakoid membrane. The enzyme catalyses a plastoquinone + NADH + (n+1) H(+)(in) = a plastoquinol + NAD(+) + n H(+)(out). The catalysed reaction is a plastoquinone + NADPH + (n+1) H(+)(in) = a plastoquinol + NADP(+) + n H(+)(out). Its function is as follows. NDH shuttles electrons from NAD(P)H:plastoquinone, via FMN and iron-sulfur (Fe-S) centers, to quinones in the photosynthetic chain and possibly in a chloroplast respiratory chain. The immediate electron acceptor for the enzyme in this species is believed to be plastoquinone. Couples the redox reaction to proton translocation, and thus conserves the redox energy in a proton gradient. The polypeptide is NAD(P)H-quinone oxidoreductase subunit 3, chloroplastic (Oenothera biennis (German evening primrose)).